We begin with the raw amino-acid sequence, 595 residues long: Zinc finger protein 467 (595 aa).

The disordered stretch occupies residues 1–67 (MRETLEALSS…EEGAHTEQAE (67 aa)). Lysine 97 participates in a covalent cross-link: Glycyl lysine isopeptide (Lys-Gly) (interchain with G-Cter in SUMO2). 6 consecutive C2H2-type zinc fingers follow at residues 160–182 (YGCG…QRLH), 188–210 (CACP…QRSH), 216–238 (FPCS…LRTH), 244–266 (YPCA…QKTH), 272–294 (FPCT…QRIH), and 300–322 (YQCA…QRVH). Positions 313 to 350 (QHLVRHQRVHQTAGPARPSPDSSASPHSTAPSPTPSFP) are disordered. The segment covering 325-343 (AGPARPSPDSSASPHSTAP) has biased composition (low complexity). 6 C2H2-type zinc fingers span residues 355–377 (FACS…QCLH), 431–453 (FFCP…PRVH), 459–481 (FACT…SRAH), 487–509 (FACA…QAVH), 515–537 (HACA…QAIH), and 543–565 (FSCP…QLIH). A Glycyl lysine isopeptide (Lys-Gly) (interchain with G-Cter in SUMO2) cross-link involves residue lysine 368.

This sequence belongs to the krueppel C2H2-type zinc-finger protein family. Interacts with STAT3. Enhances STAT3 activity by keeping it in the nucleus.

It localises to the nucleus. Functionally, transcription factor that promotes adipocyte differentiation and suppresses osteoblast differentiation in the bone marrow. Enhances the osteoclast-supporting ability of stromal cells. Binds with STAT3 the consensus sequence 5'-CTTCTGGGAAGA-3' of the acute phase response element (APRE). Transactivates several promoters including FOS, OSM and PPARG. Recruits a histone deacetylase complex. The chain is Zinc finger protein 467 (ZNF467) from Homo sapiens (Human).